A 179-amino-acid polypeptide reads, in one-letter code: Large ribosomal subunit protein uL6 (179 aa).

It belongs to the universal ribosomal protein uL6 family. Part of the 50S ribosomal subunit.

Its function is as follows. This protein binds to the 23S rRNA, and is important in its secondary structure. It is located near the subunit interface in the base of the L7/L12 stalk, and near the tRNA binding site of the peptidyltransferase center. In Rhodococcus opacus (strain B4), this protein is Large ribosomal subunit protein uL6.